We begin with the raw amino-acid sequence, 100 residues long: NADH-quinone oxidoreductase subunit K (100 aa).

3 helical membrane-spanning segments follow: residues 4–24 (LQHG…GLLI), 28–48 (LLFM…AFVV), and 60–80 (VMYI…LALL).

It belongs to the complex I subunit 4L family. As to quaternary structure, NDH-1 is composed of 13 different subunits. Subunits NuoA, H, J, K, L, M, N constitute the membrane sector of the complex.

It localises to the cell inner membrane. The catalysed reaction is a quinone + NADH + 5 H(+)(in) = a quinol + NAD(+) + 4 H(+)(out). NDH-1 shuttles electrons from NADH, via FMN and iron-sulfur (Fe-S) centers, to quinones in the respiratory chain. The immediate electron acceptor for the enzyme in this species is believed to be ubiquinone. Couples the redox reaction to proton translocation (for every two electrons transferred, four hydrogen ions are translocated across the cytoplasmic membrane), and thus conserves the redox energy in a proton gradient. This is NADH-quinone oxidoreductase subunit K from Yersinia pseudotuberculosis serotype O:1b (strain IP 31758).